A 513-amino-acid chain; its full sequence is ATP synthase subunit alpha 2 (513 aa).

169 to 176 (GDRQCGKT) serves as a coordination point for ATP.

It belongs to the ATPase alpha/beta chains family. F-type ATPases have 2 components, CF(1) - the catalytic core - and CF(0) - the membrane proton channel. CF(1) has five subunits: alpha(3), beta(3), gamma(1), delta(1), epsilon(1). CF(0) has three main subunits: a(1), b(2) and c(9-12). The alpha and beta chains form an alternating ring which encloses part of the gamma chain. CF(1) is attached to CF(0) by a central stalk formed by the gamma and epsilon chains, while a peripheral stalk is formed by the delta and b chains.

Its subcellular location is the cell inner membrane. It catalyses the reaction ATP + H2O + 4 H(+)(in) = ADP + phosphate + 5 H(+)(out). Functionally, produces ATP from ADP in the presence of a proton gradient across the membrane. The alpha chain is a regulatory subunit. This chain is ATP synthase subunit alpha 2, found in Paraburkholderia xenovorans (strain LB400).